Reading from the N-terminus, the 353-residue chain is Uroporphyrinogen decarboxylase (353 aa).

Residues 25-29 (RQAGR), aspartate 74, tyrosine 151, serine 206, and histidine 325 each bind substrate.

Belongs to the uroporphyrinogen decarboxylase family. As to quaternary structure, homodimer.

The protein resides in the cytoplasm. The catalysed reaction is uroporphyrinogen III + 4 H(+) = coproporphyrinogen III + 4 CO2. It participates in porphyrin-containing compound metabolism; protoporphyrin-IX biosynthesis; coproporphyrinogen-III from 5-aminolevulinate: step 4/4. Functionally, catalyzes the decarboxylation of four acetate groups of uroporphyrinogen-III to yield coproporphyrinogen-III. The protein is Uroporphyrinogen decarboxylase of Chloroherpeton thalassium (strain ATCC 35110 / GB-78).